We begin with the raw amino-acid sequence, 422 residues long: Serine protease HTRA2, mitochondrial (422 aa).

The transit peptide at Met-1–Ile-17 directs the protein to the mitochondrion. Positions Ala-18–Gly-74 are excised as a propeptide. Positions Ser-24–Arg-56 are disordered. The span at Pro-41–Gln-51 shows a compositional bias: polar residues. The chain crosses the membrane as a helical span at residues Leu-64–Ile-82. Short sequence motifs (IAP-binding) lie at residues Ala-75–Ser-78 and Ser-94–Thr-97. Positions Ser-139–Leu-302 are serine protease. Catalysis depends on charge relay system residues His-157, Asp-189, and Ser-266. One can recognise a PDZ domain in the interval Met-325 to Val-410.

Belongs to the peptidase S1C family. As to quaternary structure, interacts with th/DIAP1 (via BIR 2 domain).

Its subcellular location is the mitochondrion intermembrane space. The protein localises to the mitochondrion membrane. The catalysed reaction is Cleavage of non-polar aliphatic amino-acids at the P1 position, with a preference for Val, Ile and Met. At the P2 and P3 positions, Arg is selected most strongly with a secondary preference for other hydrophilic residues.. Functionally, serine protease that shows proteolytic activity against a non-specific substrate beta-casein. Promotes or induces cell death either by direct binding to and inhibition of BIRC proteins (also called inhibitor of apoptosis proteins, IAPs), leading to an increase in caspase activity, or by a BIRC inhibition-independent, caspase-independent and serine protease activity-dependent mechanism. Can antagonize antiapoptotic activity of th/Diap1 by directly inducing the degradation of th/Diap1. The polypeptide is Serine protease HTRA2, mitochondrial (Drosophila erecta (Fruit fly)).